Here is a 420-residue protein sequence, read N- to C-terminus: UDP-N-acetylglucosamine 1-carboxyvinyltransferase (420 aa).

22-23 (KN) is a phosphoenolpyruvate binding site. Arginine 92 serves as a coordination point for UDP-N-acetyl-alpha-D-glucosamine. The active-site Proton donor is the cysteine 116. Cysteine 116 is modified (2-(S-cysteinyl)pyruvic acid O-phosphothioketal). Residues 121 to 125 (RPVDQ), aspartate 304, and isoleucine 326 contribute to the UDP-N-acetyl-alpha-D-glucosamine site.

This sequence belongs to the EPSP synthase family. MurA subfamily.

It is found in the cytoplasm. The catalysed reaction is phosphoenolpyruvate + UDP-N-acetyl-alpha-D-glucosamine = UDP-N-acetyl-3-O-(1-carboxyvinyl)-alpha-D-glucosamine + phosphate. It functions in the pathway cell wall biogenesis; peptidoglycan biosynthesis. Cell wall formation. Adds enolpyruvyl to UDP-N-acetylglucosamine. The polypeptide is UDP-N-acetylglucosamine 1-carboxyvinyltransferase (Paraburkholderia xenovorans (strain LB400)).